The chain runs to 237 residues: Derlin-2 (237 aa).

Residues 1-20 are Cytoplasmic-facing; sequence MNGVVAALEEMPPVTRFYTG. A helical membrane pass occupies residues 21-41; it reads ACVLLTTAVHLEFVTPFHLYF. The Lumenal segment spans residues 42 to 54; sequence NWELIIRKYQFWR. The helical transmembrane segment at 55-75 threads the bilayer; it reads LITSFCFFGSFGFSFLFNMIF. At 76–97 the chain is on the cytoplasmic side; that stretch reads TYRYCMMLEEGSFRGRRADFVY. Residues 98-118 traverse the membrane as a helical segment; sequence MFLFGAVLMILSGIFVQILFL. Residues 119–166 lie on the Lumenal side of the membrane; the sequence is GQAFTIMLVYIWSRRNPMIQMNFFGVLTFTAPYLPWVLLLFSLLLGNN. The chain crosses the membrane as a helical span at residues 167–187; the sequence is AVVDFMGIACGHIYFFLEDVF. Topologically, residues 188 to 237 are cytoplasmic; sequence PFQEHGKRFLKTPQWLVYLFDERRPEPLPEDERPGGFEWGDEQPEQEQHD. Positions 212–222 are enriched in basic and acidic residues; that stretch reads PEPLPEDERPG. The segment at 212-237 is disordered; the sequence is PEPLPEDERPGGFEWGDEQPEQEQHD. Residues 226 to 237 show a composition bias toward acidic residues; it reads WGDEQPEQEQHD.

This sequence belongs to the derlin family.

Its subcellular location is the endoplasmic reticulum membrane. In terms of biological role, may be required for the degradation process of some specific misfolded endoplasmic reticulum (ER) luminal proteins. Participates in the transfer of misfolded proteins from the ER to the cytosol, where they are destroyed by the proteasome in a ubiquitin-dependent manner. Its precise function remains unclear, but its ability to complement der1 mutations in C.cerevisiae, suggests a similar function in the degradation of ER misfolded proteins. The polypeptide is Derlin-2 (Caenorhabditis elegans).